A 991-amino-acid polypeptide reads, in one-letter code: Antigenic heat-stable 120 kDa protein (991 aa).

Disordered regions lie at residues 1 to 37 (DTSE…TPAL), 54 to 73 (TPSM…TSDP), and 348 to 384 (GQSK…TNQP). Positions 12–29 (EYTEEQKQTEEQEQKEFL) are enriched in basic and acidic residues. The span at 348–373 (GQSKEQPLITPQQTTSSSVEPPQYKQ) shows a compositional bias: polar residues.

Its subcellular location is the cytoplasm. This chain is Antigenic heat-stable 120 kDa protein (sca4), found in Rickettsia sibirica.